The following is a 181-amino-acid chain: NADH-quinone oxidoreductase subunit I (181 aa).

2 4Fe-4S ferredoxin-type domains span residues 52-81 and 91-120; these read TRDS…LKKS and EFFR…LISD. Cys-61, Cys-64, Cys-67, Cys-71, Cys-100, Cys-103, Cys-106, and Cys-110 together coordinate [4Fe-4S] cluster.

The protein belongs to the complex I 23 kDa subunit family. As to quaternary structure, NDH-1 is composed of 13 different subunits. Subunits NuoA, H, J, K, L, M, N constitute the membrane sector of the complex. [4Fe-4S] cluster is required as a cofactor.

The protein localises to the cell inner membrane. It catalyses the reaction a quinone + NADH + 5 H(+)(in) = a quinol + NAD(+) + 4 H(+)(out). Functionally, NDH-1 shuttles electrons from NADH, via FMN and iron-sulfur (Fe-S) centers, to quinones in the respiratory chain. The immediate electron acceptor for the enzyme in this species is believed to be ubiquinone. Couples the redox reaction to proton translocation (for every two electrons transferred, four hydrogen ions are translocated across the cytoplasmic membrane), and thus conserves the redox energy in a proton gradient. This Blochmanniella floridana protein is NADH-quinone oxidoreductase subunit I.